We begin with the raw amino-acid sequence, 84 residues long: Small ribosomal subunit protein bS18A (84 aa).

The protein belongs to the bacterial ribosomal protein bS18 family. Part of the 30S ribosomal subunit. Forms a tight heterodimer with protein bS6.

Binds as a heterodimer with protein bS6 to the central domain of the 16S rRNA, where it helps stabilize the platform of the 30S subunit. The chain is Small ribosomal subunit protein bS18A from Frankia alni (strain DSM 45986 / CECT 9034 / ACN14a).